The following is a 617-amino-acid chain: Autophagy-related protein 20 (617 aa).

The tract at residues M1 to R83 is disordered. The segment covering Q20–T31 has biased composition (low complexity). Over residues D48 to D58 the composition is skewed to basic and acidic residues. Positions D59–T68 are enriched in acidic residues. The region spanning Y89–S209 is the PX domain. A 1,2-diacyl-sn-glycero-3-phospho-(1D-myo-inositol-3-phosphate) contacts are provided by R126, S128, K152, and R175. Positions Q403–Q440 form a coiled coil. Residues Y434–F516 form a disordered region. Residues P454–S463 are compositionally biased toward basic and acidic residues. The segment covering D480–P500 has biased composition (polar residues).

Belongs to the sorting nexin family. Forms a complex with SNX4/ATG24 and ATG17.

Its subcellular location is the endosome membrane. It is found in the preautophagosomal structure membrane. Required for cytoplasm to vacuole transport (Cvt), pexophagy and mitophagy. Also involved in endoplasmic reticulum-specific autophagic process and is essential for the survival of cells subjected to severe ER stress. Functions in protein retrieval from the endocytic pathway. Required for proper sorting of the v-SNARE protein SNC1. Autophagy is required for proper vegetative growth, asexual/sexual reproduction, and full virulence. Autophagy is particularly involved in the biosynthesis of deoxynivalenol (DON), an important virulence determinant. This is Autophagy-related protein 20 from Gibberella zeae (strain ATCC MYA-4620 / CBS 123657 / FGSC 9075 / NRRL 31084 / PH-1) (Wheat head blight fungus).